A 399-amino-acid chain; its full sequence is L-asparaginase-like protein GE13669 (399 aa).

The first 22 residues, 1–22 (MLAQSCCLRLLILLLLFKSTCS), serve as a signal peptide directing secretion. 3 disulfides stabilise this stretch: Cys90–Cys95, Cys189–Cys205, and Cys344–Cys371.

Belongs to the Ntn-hydrolase family.

The sequence is that of L-asparaginase-like protein GE13669 from Drosophila yakuba (Fruit fly).